Consider the following 241-residue polypeptide: 4-hydroxy-tetrahydrodipicolinate reductase (241 aa).

NAD(+) contacts are provided by residues 80-82 (ATT) and 104-107 (SANM). The active-site Proton donor/acceptor is the His-136. His-137 provides a ligand contact to (S)-2,3,4,5-tetrahydrodipicolinate. Lys-140 serves as the catalytic Proton donor. 146–147 (GT) contacts (S)-2,3,4,5-tetrahydrodipicolinate.

Belongs to the DapB family.

It is found in the cytoplasm. It catalyses the reaction (S)-2,3,4,5-tetrahydrodipicolinate + NAD(+) + H2O = (2S,4S)-4-hydroxy-2,3,4,5-tetrahydrodipicolinate + NADH + H(+). It carries out the reaction (S)-2,3,4,5-tetrahydrodipicolinate + NADP(+) + H2O = (2S,4S)-4-hydroxy-2,3,4,5-tetrahydrodipicolinate + NADPH + H(+). The protein operates within amino-acid biosynthesis; L-lysine biosynthesis via DAP pathway; (S)-tetrahydrodipicolinate from L-aspartate: step 4/4. Functionally, catalyzes the conversion of 4-hydroxy-tetrahydrodipicolinate (HTPA) to tetrahydrodipicolinate. This chain is 4-hydroxy-tetrahydrodipicolinate reductase, found in Staphylococcus haemolyticus (strain JCSC1435).